A 264-amino-acid polypeptide reads, in one-letter code: Triosephosphate isomerase (264 aa).

A substrate-binding site is contributed by 12-14 (NWK). Histidine 104 acts as the Electrophile in catalysis. The active-site Proton acceptor is the glutamate 176. Substrate contacts are provided by residues glycine 182, serine 222, and 243-244 (GG).

The protein belongs to the triosephosphate isomerase family. In terms of assembly, homodimer.

The protein resides in the cytoplasm. The catalysed reaction is D-glyceraldehyde 3-phosphate = dihydroxyacetone phosphate. It functions in the pathway carbohydrate biosynthesis; gluconeogenesis. The protein operates within carbohydrate degradation; glycolysis; D-glyceraldehyde 3-phosphate from glycerone phosphate: step 1/1. Involved in the gluconeogenesis. Catalyzes stereospecifically the conversion of dihydroxyacetone phosphate (DHAP) to D-glyceraldehyde-3-phosphate (G3P). This is Triosephosphate isomerase from Bifidobacterium adolescentis (strain ATCC 15703 / DSM 20083 / NCTC 11814 / E194a).